Here is a 466-residue protein sequence, read N- to C-terminus: Paraneoplastic antigen Ma3 homolog (466 aa).

The segment at 379–408 (RPYQGSRRRRHRRRGQHRKGGVPRDDSQGT) is disordered. Positions 384–399 (SRRRRHRRRGQHRKGG) are enriched in basic residues. A CCHC-type zinc finger spans residues 415–432 (TFCYSCGEDGHIRVHCFN). Positions 441 to 466 (QKRQAAMEKGNRSWAWEKSHPKPKTK) are disordered. A compositionally biased stretch (basic and acidic residues) spans 445–460 (AAMEKGNRSWAWEKSH).

It belongs to the PNMA family. As to expression, expressed in the cerebrum and cerebellum.

It is found in the nucleus. It localises to the nucleolus. The chain is Paraneoplastic antigen Ma3 homolog (Pnma3) from Mus musculus (Mouse).